The chain runs to 1431 residues: DNA-directed RNA polymerase subunit beta' (1431 aa).

Residues Cys-66, Cys-68, Cys-81, and Cys-84 each contribute to the Zn(2+) site. The Mg(2+) site is built by Asp-470, Asp-472, and Asp-474. The Zn(2+) site is built by Cys-813, Cys-887, Cys-894, and Cys-897.

This sequence belongs to the RNA polymerase beta' chain family. In terms of assembly, the RNAP catalytic core consists of 2 alpha, 1 beta, 1 beta' and 1 omega subunit. When a sigma factor is associated with the core the holoenzyme is formed, which can initiate transcription. Mg(2+) serves as cofactor. Zn(2+) is required as a cofactor.

The catalysed reaction is RNA(n) + a ribonucleoside 5'-triphosphate = RNA(n+1) + diphosphate. DNA-dependent RNA polymerase catalyzes the transcription of DNA into RNA using the four ribonucleoside triphosphates as substrates. This chain is DNA-directed RNA polymerase subunit beta', found in Parabacteroides distasonis (strain ATCC 8503 / DSM 20701 / CIP 104284 / JCM 5825 / NCTC 11152).